The sequence spans 919 residues: Calcium-transporting ATPase type 2C member 1 (919 aa).

Residues 1–70 are Cytoplasmic-facing; that stretch reads MKVARFQKIP…NEFDISEDEP (70 aa). Residues 71-91 traverse the membrane as a helical segment; that stretch reads LWKKYISQFKNPLIMLLLASA. The Lumenal portion of the chain corresponds to 92 to 104; that stretch reads VISVLMHQFDDAV. Residues 105–123 traverse the membrane as a helical segment; it reads SITVAILIVVTVAFVQEYR. Residues 124 to 262 lie on the Cytoplasmic side of the membrane; that stretch reads SEKSLEELSK…APKTPLQKSM (139 aa). Residues 263-282 form a helical membrane-spanning segment; it reads DLLGKQLSFYSFGIIGIIML. Residues 283-294 lie on the Lumenal side of the membrane; the sequence is VGWLLGKDILEM. Residues 295–312 traverse the membrane as a helical segment; sequence FTISVSLAVAAIPEGLPI. Residues V303, A304, I306, and E308 each contribute to the Ca(2+) site. Residues 313 to 699 are Cytoplasmic-facing; the sequence is VVTVTLALGV…EEGKGIYNNI (387 aa). The 4-aspartylphosphate intermediate role is filled by D350. The Mg(2+) site is built by D644 and D648. A helical membrane pass occupies residues 700–719; it reads KNFVRFQLSTSIAALTLISL. Topologically, residues 720–729 are lumenal; sequence ATLMNFPNPL. The chain crosses the membrane as a helical span at residues 730-750; sequence NAMQILWINIIMDGPPAQSLG. The Ca(2+) site is built by N738 and D742. Over 751-770 the chain is Cytoplasmic; the sequence is VEPVDKDVIRKPPRNWKDSI. The helical transmembrane segment at 771–793 threads the bilayer; it reads LTKNLILKILVSSIIIVCGTLFV. The Lumenal segment spans residues 794 to 808; sequence FWRELRDNVITPRDT. Residues 809-828 traverse the membrane as a helical segment; it reads TMTFTCFVFFDMFNALSSRS. The Cytoplasmic portion of the chain corresponds to 829-841; it reads QTKSVFEIGLCSN. Residues 842–860 traverse the membrane as a helical segment; it reads RMFCYAVLGSIMGQLLVIY. Over 861–875 the chain is Lumenal; the sequence is FPPLQKVFQTESLSI. A helical transmembrane segment spans residues 876–896; it reads LDLLFLLGLTSSVCIVAEIIK. The Cytoplasmic portion of the chain corresponds to 897–919; the sequence is KVERSREKIQKHVSSTSSSFLEV.

This sequence belongs to the cation transport ATPase (P-type) (TC 3.A.3) family. Type IIA subfamily. Monomer. Homodimer. Found in most tissues except colon, thymus, spleen and leukocytes. Expressed in keratinocytes (at protein level).

The protein localises to the golgi apparatus. It localises to the trans-Golgi network membrane. The protein resides in the golgi stack membrane. The catalysed reaction is Ca(2+)(in) + ATP + H2O = Ca(2+)(out) + ADP + phosphate + H(+). It catalyses the reaction Mn(2+)(in) + ATP + H2O = Mn(2+)(out) + ADP + phosphate + H(+). Functionally, ATP-driven pump that supplies the Golgi apparatus with Ca(2+) and Mn(2+) ions, both essential cofactors for processing and trafficking of newly synthesized proteins in the secretory pathway. Within a catalytic cycle, acquires Ca(2+) or Mn(2+) ions on the cytoplasmic side of the membrane and delivers them to the lumenal side. The transfer of ions across the membrane is coupled to ATP hydrolysis and is associated with a transient phosphorylation that shifts the pump conformation from inward-facing to outward-facing state. Plays a primary role in the maintenance of Ca(2+) homeostasis in the trans-Golgi compartment with a functional impact on Golgi and post-Golgi protein sorting as well as a structural impact on cisternae morphology. Responsible for loading the Golgi stores with Ca(2+) ions in keratinocytes, contributing to keratinocyte differentiation and epidermis integrity. Participates in Ca(2+) and Mn(2+) ions uptake into the Golgi store of hippocampal neurons and regulates protein trafficking required for neural polarity. May also play a role in the maintenance of Ca(2+) and Mn(2+) homeostasis and signaling in the cytosol while preventing cytotoxicity. The sequence is that of Calcium-transporting ATPase type 2C member 1 from Homo sapiens (Human).